A 419-amino-acid polypeptide reads, in one-letter code: Probable pectate lyase C (419 aa).

The N-terminal stretch at 1–19 is a signal peptide; sequence MRLTPSLISCLSLLHFTSA. Residues Asn-48, Asn-164, and Asn-201 are each glycosylated (N-linked (GlcNAc...) asparagine). The active site involves Arg-204. An EF-hand domain is found at 261–296; the sequence is NENFHAYVETNYYDSDKDGTLNGSELGVDSTNYGGM. Ca(2+)-binding residues include Asp-274, Asp-276, Asp-278, and Thr-280. N-linked (GlcNAc...) asparagine glycosylation is present at Asn-282. Glu-285 serves as a coordination point for Ca(2+). Residues 350–395 form a disordered region; that stretch reads ALISDEADMGGAGDLDQGTTPTDTDGDGIPDDAEAELGTDPNTADS. The segment covering 363 to 372 has biased composition (low complexity); that stretch reads DLDQGTTPTD. The segment covering 373-386 has biased composition (acidic residues); the sequence is TDGDGIPDDAEAEL.

Belongs to the polysaccharide lyase 1 family. Ca(2+) is required as a cofactor.

It localises to the secreted. The catalysed reaction is Eliminative cleavage of (1-&gt;4)-alpha-D-galacturonan to give oligosaccharides with 4-deoxy-alpha-D-galact-4-enuronosyl groups at their non-reducing ends.. Its function is as follows. Pectinolytic enzyme consist of four classes of enzymes: pectin lyase, polygalacturonase, pectin methylesterase and rhamnogalacturonase. Among pectinolytic enzymes, pectin lyase is the most important in depolymerization of pectin, since it cleaves internal glycosidic bonds of highly methylated pectins. Favors pectate, the anion, over pectin, the methyl ester. This is Probable pectate lyase C (plyC) from Aspergillus flavus (strain ATCC 200026 / FGSC A1120 / IAM 13836 / NRRL 3357 / JCM 12722 / SRRC 167).